Consider the following 217-residue polypeptide: Probable GTP-binding protein EngB (217 aa).

Residues Gly33–Arg217 form the EngB-type G domain. Residues Gly41–Ser48, Gly68–Glu72, Asp95–Gly98, Thr162–Asp165, and Thr196–Ser198 each bind GTP. Mg(2+)-binding residues include Ser48 and Thr70.

The protein belongs to the TRAFAC class TrmE-Era-EngA-EngB-Septin-like GTPase superfamily. EngB GTPase family. It depends on Mg(2+) as a cofactor.

Its function is as follows. Necessary for normal cell division and for the maintenance of normal septation. This is Probable GTP-binding protein EngB from Sinorhizobium medicae (strain WSM419) (Ensifer medicae).